The primary structure comprises 570 residues: Methionine--tRNA ligase (570 aa).

Positions 11 to 21 match the 'HIGH' region motif; that stretch reads PYVQTVPHLGN. Zn(2+) contacts are provided by cysteine 143, cysteine 146, cysteine 156, and cysteine 159. A 'KMSKS' region motif is present at residues 333-337; it reads KFSKS. Lysine 336 is a binding site for ATP.

The protein belongs to the class-I aminoacyl-tRNA synthetase family. MetG type 1 subfamily. Zn(2+) is required as a cofactor.

The protein resides in the cytoplasm. It carries out the reaction tRNA(Met) + L-methionine + ATP = L-methionyl-tRNA(Met) + AMP + diphosphate. Functionally, is required not only for elongation of protein synthesis but also for the initiation of all mRNA translation through initiator tRNA(fMet) aminoacylation. The polypeptide is Methionine--tRNA ligase (Pyrobaculum arsenaticum (strain DSM 13514 / JCM 11321 / PZ6)).